The primary structure comprises 461 residues: Kynureninase (461 aa).

Pyridoxal 5'-phosphate is bound by residues Leu-114, Thr-115, 142-145, Asp-228, His-231, and Tyr-253; that span reads FPSD. Lys-254 bears the N6-(pyridoxal phosphate)lysine mark. The pyridoxal 5'-phosphate site is built by Trp-288 and Asn-316.

The protein belongs to the kynureninase family. In terms of assembly, homodimer. Requires pyridoxal 5'-phosphate as cofactor.

The protein resides in the cytoplasm. It catalyses the reaction L-kynurenine + H2O = anthranilate + L-alanine + H(+). The catalysed reaction is 3-hydroxy-L-kynurenine + H2O = 3-hydroxyanthranilate + L-alanine + H(+). Its pathway is amino-acid degradation; L-kynurenine degradation; L-alanine and anthranilate from L-kynurenine: step 1/1. The protein operates within cofactor biosynthesis; NAD(+) biosynthesis; quinolinate from L-kynurenine: step 2/3. Its function is as follows. Catalyzes the cleavage of L-kynurenine (L-Kyn) and L-3-hydroxykynurenine (L-3OHKyn) into anthranilic acid (AA) and 3-hydroxyanthranilic acid (3-OHAA), respectively. The polypeptide is Kynureninase (Lodderomyces elongisporus (strain ATCC 11503 / CBS 2605 / JCM 1781 / NBRC 1676 / NRRL YB-4239) (Yeast)).